Here is a 252-residue protein sequence, read N- to C-terminus: MLAKRIIPCLDVKEGRVVKGVNFIGLQDVGDPVEIAALYNDAGADEIVFLDITATHEGRKTIIDVVEKTASKVFIPLTVGGGISSVKDMYNLLRAGADKVSINSAAVRNPKLIEEGAQHFGSQCIVVAIDARKVAEGKWNVYVNGGRVDTGMDAIEWAKCVVMLGAGEILLTSMDADGTKNGYDLRLTEEISKSVSVPVIASGGCGHADHIIEVFQKTTVDAALAASIFHYGEATIGGVKRKLRNANVEVRL.

Catalysis depends on residues Asp-11 and Asp-130.

Belongs to the HisA/HisF family. As to quaternary structure, heterodimer of HisH and HisF.

It is found in the cytoplasm. The catalysed reaction is 5-[(5-phospho-1-deoxy-D-ribulos-1-ylimino)methylamino]-1-(5-phospho-beta-D-ribosyl)imidazole-4-carboxamide + L-glutamine = D-erythro-1-(imidazol-4-yl)glycerol 3-phosphate + 5-amino-1-(5-phospho-beta-D-ribosyl)imidazole-4-carboxamide + L-glutamate + H(+). Its pathway is amino-acid biosynthesis; L-histidine biosynthesis; L-histidine from 5-phospho-alpha-D-ribose 1-diphosphate: step 5/9. In terms of biological role, IGPS catalyzes the conversion of PRFAR and glutamine to IGP, AICAR and glutamate. The HisF subunit catalyzes the cyclization activity that produces IGP and AICAR from PRFAR using the ammonia provided by the HisH subunit. The polypeptide is Imidazole glycerol phosphate synthase subunit HisF (Bacillus cereus (strain ZK / E33L)).